A 110-amino-acid polypeptide reads, in one-letter code: Large ribosomal subunit protein uL22 (110 aa).

This sequence belongs to the universal ribosomal protein uL22 family. In terms of assembly, part of the 50S ribosomal subunit.

This protein binds specifically to 23S rRNA; its binding is stimulated by other ribosomal proteins, e.g. L4, L17, and L20. It is important during the early stages of 50S assembly. It makes multiple contacts with different domains of the 23S rRNA in the assembled 50S subunit and ribosome. In terms of biological role, the globular domain of the protein is located near the polypeptide exit tunnel on the outside of the subunit, while an extended beta-hairpin is found that lines the wall of the exit tunnel in the center of the 70S ribosome. The sequence is that of Large ribosomal subunit protein uL22 from Yersinia pseudotuberculosis serotype O:1b (strain IP 31758).